The sequence spans 681 residues: Minichromosome maintenance domain-containing protein 2 (681 aa).

S292 is modified (phosphoserine). Residues 533–621 form the MCM domain; sequence RQFTTEDFEK…LIAALLFETS (89 aa).

Plays an important role in meiotic recombination and associated DNA double-strand break repair. This chain is Minichromosome maintenance domain-containing protein 2 (MCMDC2), found in Homo sapiens (Human).